Here is a 603-residue protein sequence, read N- to C-terminus: Serine protease 56 (603 aa).

The first 19 residues, 1–19, serve as a signal peptide directing secretion; that stretch reads MLLAVLLLLPLPSSWFAHG. Positions 64-96 are disordered; sequence SHECRGSGRPRPQALLQDPPEPGPCGERRPSTA. An N-linked (GlcNAc...) asparagine glycan is attached at asparagine 97. The Peptidase S1 domain occupies 105–337; that stretch reads IVGGSAAPPG…FKDWLQEQMS (233 aa). The cysteines at positions 130 and 146 are disulfide-linked. Active-site charge relay system residues include histidine 145 and aspartate 191. Disulfide bonds link cysteine 225–cysteine 292, cysteine 256–cysteine 271, and cysteine 282–cysteine 313. The Charge relay system role is filled by serine 286. Disordered stretches follow at residues 442–474 and 573–603; these read PARE…NGCP and EGPW…ARQP.

The protein belongs to the peptidase S1 family. In terms of tissue distribution, expressed neural retina, cornea, sclera and optic nerve.

Serine protease required during eye development. The protein is Serine protease 56 (PRSS56) of Homo sapiens (Human).